The chain runs to 149 residues: UPF0178 protein Pmen_0294 (149 aa).

It belongs to the UPF0178 family.

The protein is UPF0178 protein Pmen_0294 of Ectopseudomonas mendocina (strain ymp) (Pseudomonas mendocina).